Consider the following 143-residue polypeptide: Large ribosomal subunit protein uL13 (143 aa).

This sequence belongs to the universal ribosomal protein uL13 family. In terms of assembly, part of the 50S ribosomal subunit.

This protein is one of the early assembly proteins of the 50S ribosomal subunit, although it is not seen to bind rRNA by itself. It is important during the early stages of 50S assembly. This is Large ribosomal subunit protein uL13 from Desulfitobacterium hafniense (strain DSM 10664 / DCB-2).